Here is a 273-residue protein sequence, read N- to C-terminus: Small ribosomal subunit protein eS1 (273 aa).

It belongs to the eukaryotic ribosomal protein eS1 family. As to quaternary structure, component of the small ribosomal subunit. Mature ribosomes consist of a small (40S) and a large (60S) subunit. The 40S subunit contains about 33 different proteins and 1 molecule of RNA (18S). The 60S subunit contains about 49 different proteins and 3 molecules of RNA (25S, 5.8S and 5S).

It is found in the cytoplasm. The chain is Small ribosomal subunit protein eS1 (rps3a) from Dictyostelium discoideum (Social amoeba).